Reading from the N-terminus, the 428-residue chain is UPF0229 protein YeaH (428 aa).

Basic and acidic residues predominate over residues 77–90 (PGNDHFIQNDRIER). The interval 77–111 (PGNDHFIQNDRIERPQSGGGGGSGSGQGQASQDGE) is disordered. Positions 93-103 (SGGGGGSGSGQ) are enriched in gly residues.

The protein belongs to the UPF0229 family.

The protein is UPF0229 protein YeaH of Salmonella typhi.